The primary structure comprises 402 residues: Large ribosomal subunit protein uL3 (402 aa).

The segment at 1–35 is disordered; sequence MSHRKFSAPRHGSMGFTPKKRSKRHRGKVKAFPKD. The span at 18–31 shows a compositional bias: basic residues; sequence PKKRSKRHRGKVKA.

This sequence belongs to the universal ribosomal protein uL3 family.

The protein resides in the cytoplasm. In terms of biological role, the L3 protein is a component of the large subunit of cytoplasmic ribosomes. In Toxocara canis (Canine roundworm), this protein is Large ribosomal subunit protein uL3 (RPL3).